The primary structure comprises 511 residues: GMP synthase [glutamine-hydrolyzing] (511 aa).

A Glutamine amidotransferase type-1 domain is found at 5–195 (DILVLDFGSQ…AKYACNCESV (191 aa)). Cys82 serves as the catalytic Nucleophile. Catalysis depends on residues His169 and Glu171. The 191-residue stretch at 196-386 (WNMGSFAKTQ…LGLSKEVVYR (191 aa)) folds into the GMPS ATP-PPase domain. An ATP-binding site is contributed by 223 to 229 (SGGVDSS).

As to quaternary structure, homodimer.

It catalyses the reaction XMP + L-glutamine + ATP + H2O = GMP + L-glutamate + AMP + diphosphate + 2 H(+). Its pathway is purine metabolism; GMP biosynthesis; GMP from XMP (L-Gln route): step 1/1. Functionally, catalyzes the synthesis of GMP from XMP. In Campylobacter jejuni subsp. jejuni serotype O:23/36 (strain 81-176), this protein is GMP synthase [glutamine-hydrolyzing].